The sequence spans 116 residues: S-adenosylmethionine decarboxylase proenzyme (116 aa).

Residue S63 is the Schiff-base intermediate with substrate; via pyruvic acid of the active site. The residue at position 63 (S63) is a Pyruvic acid (Ser); by autocatalysis. H68 functions as the Proton acceptor; for processing activity in the catalytic mechanism. The Proton donor; for catalytic activity role is filled by C83.

The protein belongs to the prokaryotic AdoMetDC family. Type 1 subfamily. In terms of assembly, heterotetramer of two alpha and two beta chains arranged as a dimer of alpha/beta heterodimers. Requires pyruvate as cofactor. Is synthesized initially as an inactive proenzyme. Formation of the active enzyme involves a self-maturation process in which the active site pyruvoyl group is generated from an internal serine residue via an autocatalytic post-translational modification. Two non-identical subunits are generated from the proenzyme in this reaction, and the pyruvate is formed at the N-terminus of the alpha chain, which is derived from the carboxyl end of the proenzyme. The post-translation cleavage follows an unusual pathway, termed non-hydrolytic serinolysis, in which the side chain hydroxyl group of the serine supplies its oxygen atom to form the C-terminus of the beta chain, while the remainder of the serine residue undergoes an oxidative deamination to produce ammonia and the pyruvoyl group blocking the N-terminus of the alpha chain.

It catalyses the reaction S-adenosyl-L-methionine + H(+) = S-adenosyl 3-(methylsulfanyl)propylamine + CO2. It participates in amine and polyamine biosynthesis; S-adenosylmethioninamine biosynthesis; S-adenosylmethioninamine from S-adenosyl-L-methionine: step 1/1. Catalyzes the decarboxylation of S-adenosylmethionine to S-adenosylmethioninamine (dcAdoMet), the propylamine donor required for the synthesis of the polyamines spermine and spermidine from the diamine putrescine. This is S-adenosylmethionine decarboxylase proenzyme from Clostridium botulinum (strain 657 / Type Ba4).